The primary structure comprises 231 residues: UPF0758 protein YsxA (231 aa).

The MPN domain occupies 109-231 (VIRSPEDGAN…FVSLKEKGYL (123 aa)). His180, His182, and Asp193 together coordinate Zn(2+). Residues 180–193 (HNHPSGDPTPSRED) carry the JAMM motif motif.

This sequence belongs to the UPF0758 family.

The sequence is that of UPF0758 protein YsxA (ysxA) from Bacillus subtilis (strain 168).